The primary structure comprises 346 residues: 2,5-dichlorohydroquinone reductive dechlorinase (346 aa).

Residues 43–154 (PRFELFHFVF…YLCDALSGGT (112 aa)) form the GST N-terminal domain. The region spanning 189-335 (DRRPESMQAV…AIIQWPGHPP (147 aa)) is the GST C-terminal domain.

It belongs to the GST superfamily.

The enzyme catalyses 2,5-dichlorohydroquinone + 2 glutathione = chlorohydroquinone + glutathione disulfide + chloride + H(+). It carries out the reaction chlorohydroquinone + 2 glutathione = hydroquinone + glutathione disulfide + chloride + H(+). Its pathway is xenobiotic degradation; gamma-hexachlorocyclohexane degradation. Its function is as follows. Catalyzes the degradation of 2,5-dichlorohydroquinone (2,5-DCHQ) into hydroquinone (HQ) via chlorohydroquinone (CHQ). Is involved in the degradation pathway that allows S.japonicum UT26 to grow on gamma-hexachlorocyclohexane (gamma-HCH or lindane) as the sole source of carbon and energy. However, the conversion of CHQ to HQ by LinD seems not to be essential for this degradation pathway, because the conversion rate of CHQ to HQ is much lower than that of 2,5-DCHQ to CHQ. CHQ is more efficiently degraded by LinE in strain UT26. The protein is 2,5-dichlorohydroquinone reductive dechlorinase of Sphingobium indicum (strain DSM 16413 / CCM 7287 / MTCC 6362 / UT26 / NBRC 101211 / UT26S) (Sphingobium japonicum).